The chain runs to 283 residues: Plasma membrane ascorbate-dependent reductase CYBRD1 (283 aa).

At 1–5 (MEGYK) the chain is on the cytoplasmic side. The chain crosses the membrane as a helical span at residues 6-30 (SFLVFLVSSLLLGFLGVIFTLVWVL). Residues 13 to 218 (SSLLLGFLGV…FGGLVVWMVT (206 aa)) enclose the Cytochrome b561 domain. The Extracellular segment spans residues 31–45 (HWREGLGWDGGAAEF). Residues 46-67 (NWHPVLVTSGFIFIQGIAIIVY) form a helical membrane-spanning segment. Heme b contacts are provided by H48, R68, and K77. Residues 68 to 76 (RLPWTWNCS) are Cytoplasmic-facing. Residues K77 and K81 each coordinate L-ascorbate. Residues 77 to 103 (KLLMKFIHAGLHLTAFVFTIVALVAVF) traverse the membrane as a helical segment. Residue H84 coordinates heme b. The Extracellular portion of the chain corresponds to 104-116 (DFHNAKNIPNMYS). Position 106 (H106) interacts with Fe(3+). Residues 113–116 (NMYS) and H118 contribute to the heme b site. The helical transmembrane segment at 117–142 (LHSWIGLTVVILYALQLVLGVSIYLL) threads the bilayer. The Cytoplasmic portion of the chain corresponds to 143–149 (PFARDTL). R150 is an L-ascorbate binding site. Residues 150–177 (RAALMPVHVYSGLLIFGTVIATALMGIT) traverse the membrane as a helical segment. Positions 157 and 178 each coordinate heme b. At 178 to 195 (EKLIFSLKEPPYSKMPPE) the chain is on the extracellular side. Residues 196 to 220 (AIFVNTFGLIILVFGGLVVWMVTTP) traverse the membrane as a helical segment. At 221–283 (AWKRPREQEI…LDDAGQRSTM (63 aa)) the chain is on the cytoplasmic side. Heme b is bound at residue K223. A disordered region spans residues 234–263 (NPTVSSPDGTEEGSTITDCSNTEKSDVELN). A compositionally biased stretch (polar residues) spans 235 to 253 (PTVSSPDGTEEGSTITDCS). The span at 254-263 (NTEKSDVELN) shows a compositional bias: basic and acidic residues.

In terms of assembly, homodimer. The cofactor is heme b.

Its subcellular location is the cell membrane. The protein localises to the apical cell membrane. It carries out the reaction Fe(3+)(out) + L-ascorbate(in) = monodehydro-L-ascorbate radical(in) + Fe(2+)(out) + H(+). The catalysed reaction is Cu(2+)(out) + L-ascorbate(in) = Cu(+)(out) + monodehydro-L-ascorbate radical(in) + H(+). It catalyses the reaction monodehydro-L-ascorbate radical(out) + L-ascorbate(in) = monodehydro-L-ascorbate radical(in) + L-ascorbate(out). Its function is as follows. Plasma membrane reductase that uses cytoplasmic ascorbate as an electron donor to reduce extracellular Fe(3+) into Fe(2+). It is also able to reduce extracellular monodehydro-L-ascorbate and may be involved in extracellular ascorbate regeneration. May also function as a cupric transmembrane reductase. This Xenopus tropicalis (Western clawed frog) protein is Plasma membrane ascorbate-dependent reductase CYBRD1 (cybrd1).